The primary structure comprises 215 residues: MRLLFFGPPGAGKGTQAKKVAQEFQIVHISTGDILRDAVSKGTELGKMAKAIMDRGELVSDEIMNSLVKERLEELDSFILDGYPRTLDQAKFLDQATKELQKEIDAAVLIDVSEEEIVKRISNRRVCPNCGKVYNLITLQPKEDEKCDVCGTKLIQRDDDKEEVVRERYKVYKKNTEPVIEYYRKNNKIITIDGAQNVEDVTKELFNILRSFNKQ.

10–15 is an ATP binding site; the sequence is GAGKGT. The NMP stretch occupies residues 30–59; it reads STGDILRDAVSKGTELGKMAKAIMDRGELV. Residues threonine 31, arginine 36, 57 to 59, 82 to 85, and glutamine 89 each bind AMP; these read ELV and GYPR. The LID stretch occupies residues 123 to 160; that stretch reads NRRVCPNCGKVYNLITLQPKEDEKCDVCGTKLIQRDDD. Arginine 124 is a binding site for ATP. The Zn(2+) site is built by cysteine 127 and cysteine 130. Residue 133-134 participates in ATP binding; it reads VY. Zn(2+) contacts are provided by cysteine 147 and cysteine 150. Positions 157 and 168 each coordinate AMP. Glutamine 196 contacts ATP.

This sequence belongs to the adenylate kinase family. In terms of assembly, monomer.

The protein resides in the cytoplasm. It carries out the reaction AMP + ATP = 2 ADP. It participates in purine metabolism; AMP biosynthesis via salvage pathway; AMP from ADP: step 1/1. Its function is as follows. Catalyzes the reversible transfer of the terminal phosphate group between ATP and AMP. Plays an important role in cellular energy homeostasis and in adenine nucleotide metabolism. This chain is Adenylate kinase, found in Petrotoga mobilis (strain DSM 10674 / SJ95).